The sequence spans 390 residues: MRYLTAGESHGPQLTTIIEGVPAGLYIEQDDINYELARRQKGHGRGRRMQIEKDQAKVLSGVRHGKTLGSPIALVVENNDWKHWTKVMGAEPITEEEESEMKRQISRPRPGHADLNGAIKYGHRDMRNVLERSSARETTVRVAAGAVAKQILAHLGIKVAGHVLEIGGVKAAHTAYESIEDLQKVTEESPVRCYDSEAGQKMMDAIDEAKKNGDSIGGIVEVIVEGMPVGVGSYVHYDRKLDSKLAGAVLSINAFKGVEFGIGFEAASKNGSEVHDEIIWDEEKGYTRKTNRLGGLEGGMSTGMPIVVRGVMKPIPTLYKPLQSVDIETKEPFSASIERSDSCAVPAASVVAEAVVAWEIANAVVEQFGLDQIDRIKENVEKMRQLQREF.

Arg39 and Arg45 together coordinate NADP(+). Residues 132–134 (RSS), 253–254 (NA), Gly298, 313–317 (KPIPT), and Arg339 contribute to the FMN site.

It belongs to the chorismate synthase family. As to quaternary structure, homotetramer. FMNH2 is required as a cofactor.

The enzyme catalyses 5-O-(1-carboxyvinyl)-3-phosphoshikimate = chorismate + phosphate. It participates in metabolic intermediate biosynthesis; chorismate biosynthesis; chorismate from D-erythrose 4-phosphate and phosphoenolpyruvate: step 7/7. Its function is as follows. Catalyzes the anti-1,4-elimination of the C-3 phosphate and the C-6 proR hydrogen from 5-enolpyruvylshikimate-3-phosphate (EPSP) to yield chorismate, which is the branch point compound that serves as the starting substrate for the three terminal pathways of aromatic amino acid biosynthesis. This reaction introduces a second double bond into the aromatic ring system. The polypeptide is Chorismate synthase (Bacillus pumilus (strain SAFR-032)).